The sequence spans 249 residues: Probable phosphoglycerate mutase (249 aa).

Substrate is bound by residues 9–16 (RHGESTWN), 22–23 (TG), R61, 88–91 (ERMY), K99, 115–116 (RR), and 184–185 (GN). The active-site Tele-phosphohistidine intermediate is the H10. E88 serves as the catalytic Proton donor/acceptor.

It belongs to the phosphoglycerate mutase family. BPG-dependent PGAM subfamily. As to quaternary structure, homodimer.

It catalyses the reaction (2R)-2-phosphoglycerate = (2R)-3-phosphoglycerate. It carries out the reaction (2R)-3-phospho-glyceroyl phosphate = (2R)-2,3-bisphosphoglycerate + H(+). In terms of biological role, catalyzes the interconversion of 2-phosphoglycerate and 3-phosphoglycerate. This is Probable phosphoglycerate mutase (gpmA) from Dictyostelium discoideum (Social amoeba).